Consider the following 111-residue polypeptide: Tubulin beta chain (111 aa).

The tract at residues 82–111 (SEYQQYQDATAEDEGEFDEEEAEGEGQEYA) is disordered. The span at 91–111 (TAEDEGEFDEEEAEGEGQEYA) shows a compositional bias: acidic residues.

The protein belongs to the tubulin family. As to quaternary structure, dimer of alpha and beta chains. A typical microtubule is a hollow water-filled tube with an outer diameter of 25 nm and an inner diameter of 15 nM. Alpha-beta heterodimers associate head-to-tail to form protofilaments running lengthwise along the microtubule wall with the beta-tubulin subunit facing the microtubule plus end conferring a structural polarity. Microtubules usually have 13 protofilaments but different protofilament numbers can be found in some organisms and specialized cells. Mg(2+) is required as a cofactor.

The protein localises to the cytoplasm. The protein resides in the cytoskeleton. Its function is as follows. Tubulin is the major constituent of microtubules, a cylinder consisting of laterally associated linear protofilaments composed of alpha- and beta-tubulin heterodimers. Microtubules grow by the addition of GTP-tubulin dimers to the microtubule end, where a stabilizing cap forms. Below the cap, tubulin dimers are in GDP-bound state, owing to GTPase activity of alpha-tubulin. The sequence is that of Tubulin beta chain from Lymnaea stagnalis (Great pond snail).